The primary structure comprises 523 residues: Glycerate kinase (523 aa).

Ser-60 bears the Phosphoserine mark.

It belongs to the glycerate kinase type-2 family. Widely expressed.

Its subcellular location is the cytoplasm. It localises to the mitochondrion. It carries out the reaction (R)-glycerate + ATP = (2R)-3-phosphoglycerate + ADP + H(+). This Homo sapiens (Human) protein is Glycerate kinase (GLYCTK).